A 551-amino-acid polypeptide reads, in one-letter code: Ubiquitin carboxyl-terminal hydrolase 24 (551 aa).

Disordered regions lie at residues 51-104 (NSSV…SLRV) and 163-188 (NEDFSSDSSSGSIQRKKNLKVPTESV). Positions 197–551 (RGLINAGNLC…QAYVLFYKQV (355 aa)) constitute a USP domain. Cysteine 206 functions as the Nucleophile in the catalytic mechanism. Polar residues predominate over residues 329–338 (SKSSVISSAN). The tract at residues 329-349 (SKSSVISSANDDGDEWETVGP) is disordered. Histidine 510 acts as the Proton acceptor in catalysis.

It belongs to the peptidase C19 family.

The catalysed reaction is Thiol-dependent hydrolysis of ester, thioester, amide, peptide and isopeptide bonds formed by the C-terminal Gly of ubiquitin (a 76-residue protein attached to proteins as an intracellular targeting signal).. In terms of biological role, recognizes and hydrolyzes the peptide bond at the C-terminal Gly of ubiquitin. Involved in the processing of poly-ubiquitin precursors as well as that of ubiquitinated proteins. The sequence is that of Ubiquitin carboxyl-terminal hydrolase 24 (UBP24) from Arabidopsis thaliana (Mouse-ear cress).